The following is a 340-amino-acid chain: DNA primase large subunit PriL (340 aa).

[4Fe-4S] cluster contacts are provided by Cys229, Cys301, Cys310, and Cys318.

Belongs to the eukaryotic-type primase large subunit family. As to quaternary structure, heterodimer of a small subunit (PriS) and a large subunit (PriL). It depends on [4Fe-4S] cluster as a cofactor.

Functionally, regulatory subunit of DNA primase, an RNA polymerase that catalyzes the synthesis of short RNA molecules used as primers for DNA polymerase during DNA replication. Stabilizes and modulates the activity of the small subunit, increasing the rate of DNA synthesis, and conferring RNA synthesis capability. The DNA polymerase activity may enable DNA primase to also catalyze primer extension after primer synthesis. May also play a role in DNA repair. This is DNA primase large subunit PriL from Thermoplasma acidophilum (strain ATCC 25905 / DSM 1728 / JCM 9062 / NBRC 15155 / AMRC-C165).